The primary structure comprises 505 residues: Glucan endo-1,3-beta-glucosidase 4 (505 aa).

The signal sequence occupies residues 1–23; that stretch reads MLLPRWFAEALLLLLSILACSNA. Asparagine 70 and asparagine 110 each carry an N-linked (GlcNAc...) asparagine glycan. Glutamate 119 functions as the Proton donor in the catalytic mechanism. Asparagine 178 and asparagine 256 each carry an N-linked (GlcNAc...) asparagine glycan. The active-site Nucleophile is glutamate 266. Asparagine 298, asparagine 338, and asparagine 357 each carry an N-linked (GlcNAc...) asparagine glycan. Cysteine 363 and cysteine 426 are oxidised to a cystine. N-linked (GlcNAc...) asparagine glycosylation occurs at asparagine 453. The GPI-anchor amidated alanine moiety is linked to residue alanine 474. The propeptide at 475-505 is removed in mature form; sequence NARIIFSYHLPILAPLALTLLQLLLQHDRLL.

The protein belongs to the glycosyl hydrolase 17 family. In terms of processing, contains two additional disulfide bonds.

It is found in the cell membrane. It catalyses the reaction Hydrolysis of (1-&gt;3)-beta-D-glucosidic linkages in (1-&gt;3)-beta-D-glucans.. The polypeptide is Glucan endo-1,3-beta-glucosidase 4 (Arabidopsis thaliana (Mouse-ear cress)).